The following is a 404-amino-acid chain: S-adenosylmethionine synthase (404 aa).

His-16 is an ATP binding site. Asp-18 contributes to the Mg(2+) binding site. Glu-44 is a binding site for K(+). Positions 57 and 100 each coordinate L-methionine. A flexible loop region spans residues 100-110 (QSPEINQGVAR). ATP-binding positions include 177–179 (DGK), Asp-257, 263–264 (RK), Ala-280, and Lys-284. Asp-257 contacts L-methionine. Lys-288 lines the L-methionine pocket.

The protein belongs to the AdoMet synthase family. In terms of assembly, homotetramer; dimer of dimers. Mg(2+) is required as a cofactor. The cofactor is K(+).

Its subcellular location is the cytoplasm. It catalyses the reaction L-methionine + ATP + H2O = S-adenosyl-L-methionine + phosphate + diphosphate. It functions in the pathway amino-acid biosynthesis; S-adenosyl-L-methionine biosynthesis; S-adenosyl-L-methionine from L-methionine: step 1/1. Its function is as follows. Catalyzes the formation of S-adenosylmethionine (AdoMet) from methionine and ATP. The overall synthetic reaction is composed of two sequential steps, AdoMet formation and the subsequent tripolyphosphate hydrolysis which occurs prior to release of AdoMet from the enzyme. In Bifidobacterium adolescentis (strain ATCC 15703 / DSM 20083 / NCTC 11814 / E194a), this protein is S-adenosylmethionine synthase.